The sequence spans 214 residues: Ribosomal RNA small subunit methyltransferase G (214 aa).

S-adenosyl-L-methionine contacts are provided by residues glycine 81, methionine 86, valine 132–glutamate 133, and arginine 147.

The protein belongs to the methyltransferase superfamily. RNA methyltransferase RsmG family.

The protein resides in the cytoplasm. It carries out the reaction guanosine(527) in 16S rRNA + S-adenosyl-L-methionine = N(7)-methylguanosine(527) in 16S rRNA + S-adenosyl-L-homocysteine. Its function is as follows. Specifically methylates the N7 position of guanine in position 527 of 16S rRNA. In Pseudomonas aeruginosa (strain LESB58), this protein is Ribosomal RNA small subunit methyltransferase G.